Here is a 245-residue protein sequence, read N- to C-terminus: 1-(5-phosphoribosyl)-5-[(5-phosphoribosylamino)methylideneamino] imidazole-4-carboxamide isomerase (245 aa).

The Proton acceptor role is filled by Asp8. Asp129 serves as the catalytic Proton donor.

The protein belongs to the HisA/HisF family.

It localises to the cytoplasm. It carries out the reaction 1-(5-phospho-beta-D-ribosyl)-5-[(5-phospho-beta-D-ribosylamino)methylideneamino]imidazole-4-carboxamide = 5-[(5-phospho-1-deoxy-D-ribulos-1-ylimino)methylamino]-1-(5-phospho-beta-D-ribosyl)imidazole-4-carboxamide. Its pathway is amino-acid biosynthesis; L-histidine biosynthesis; L-histidine from 5-phospho-alpha-D-ribose 1-diphosphate: step 4/9. The chain is 1-(5-phosphoribosyl)-5-[(5-phosphoribosylamino)methylideneamino] imidazole-4-carboxamide isomerase from Rhodopseudomonas palustris (strain ATCC BAA-98 / CGA009).